A 302-amino-acid chain; its full sequence is Sulfate adenylyltransferase subunit 2 (302 aa).

The protein belongs to the PAPS reductase family. CysD subfamily. As to quaternary structure, heterodimer composed of CysD, the smaller subunit, and CysN.

It carries out the reaction sulfate + ATP + H(+) = adenosine 5'-phosphosulfate + diphosphate. The protein operates within sulfur metabolism; hydrogen sulfide biosynthesis; sulfite from sulfate: step 1/3. With CysN forms the ATP sulfurylase (ATPS) that catalyzes the adenylation of sulfate producing adenosine 5'-phosphosulfate (APS) and diphosphate, the first enzymatic step in sulfur assimilation pathway. APS synthesis involves the formation of a high-energy phosphoric-sulfuric acid anhydride bond driven by GTP hydrolysis by CysN coupled to ATP hydrolysis by CysD. This chain is Sulfate adenylyltransferase subunit 2, found in Proteus mirabilis (strain HI4320).